The sequence spans 77 residues: MARVCQVTGKAPMVGNKVSHANNRTKRRFLPNLQYRRFWVESENRFLRLRVSNAGLRLIDKNGIDAVLADLRARGEV.

The protein belongs to the bacterial ribosomal protein bL28 family.

This is Large ribosomal subunit protein bL28 from Dechloromonas aromatica (strain RCB).